A 265-amino-acid polypeptide reads, in one-letter code: Cytochrome c oxidase subunit 3 (265 aa).

The next 6 helical transmembrane spans lie at 16 to 36, 41 to 61, 81 to 101, 162 to 182, 200 to 220, and 245 to 265; these read PWPI…VMYM, GGAT…FVWW, GPRY…FALF, AVYA…FQGM, FFLA…FSIV, and WHFV…WGGI.

It belongs to the cytochrome c oxidase subunit 3 family. Component of the cytochrome c oxidase (complex IV, CIV), a multisubunit enzyme composed of a catalytic core of 3 subunits and several supernumerary subunits. The complex exists as a monomer or a dimer and forms supercomplexes (SCs) in the inner mitochondrial membrane with ubiquinol-cytochrome c oxidoreductase (cytochrome b-c1 complex, complex III, CIII).

It is found in the mitochondrion inner membrane. It carries out the reaction 4 Fe(II)-[cytochrome c] + O2 + 8 H(+)(in) = 4 Fe(III)-[cytochrome c] + 2 H2O + 4 H(+)(out). In terms of biological role, component of the cytochrome c oxidase, the last enzyme in the mitochondrial electron transport chain which drives oxidative phosphorylation. The respiratory chain contains 3 multisubunit complexes succinate dehydrogenase (complex II, CII), ubiquinol-cytochrome c oxidoreductase (cytochrome b-c1 complex, complex III, CIII) and cytochrome c oxidase (complex IV, CIV), that cooperate to transfer electrons derived from NADH and succinate to molecular oxygen, creating an electrochemical gradient over the inner membrane that drives transmembrane transport and the ATP synthase. Cytochrome c oxidase is the component of the respiratory chain that catalyzes the reduction of oxygen to water. Electrons originating from reduced cytochrome c in the intermembrane space (IMS) are transferred via the dinuclear copper A center (CU(A)) of subunit 2 and heme A of subunit 1 to the active site in subunit 1, a binuclear center (BNC) formed by heme A3 and copper B (CU(B)). The BNC reduces molecular oxygen to 2 water molecules using 4 electrons from cytochrome c in the IMS and 4 protons from the mitochondrial matrix. This chain is Cytochrome c oxidase subunit 3 (COX3), found in Helianthus annuus (Common sunflower).